A 349-amino-acid chain; its full sequence is tRNA pseudouridine synthase D (349 aa).

Residue F27 participates in substrate binding. D80 functions as the Nucleophile in the catalytic mechanism. Position 129 (N129) interacts with substrate. The TRUD domain maps to 155–303 (GVPNYFGAQR…VEAARRAMLL (149 aa)). F329 is a binding site for substrate.

It belongs to the pseudouridine synthase TruD family.

It catalyses the reaction uridine(13) in tRNA = pseudouridine(13) in tRNA. Functionally, responsible for synthesis of pseudouridine from uracil-13 in transfer RNAs. This is tRNA pseudouridine synthase D from Escherichia coli (strain 55989 / EAEC).